The following is a 236-amino-acid chain: Glucosamine-6-phosphate deaminase (236 aa).

Catalysis depends on Asp62, which acts as the Proton acceptor; for enolization step. Asn128 functions as the For ring-opening step in the catalytic mechanism. The active-site Proton acceptor; for ring-opening step is the His130. The For ring-opening step role is filled by Glu135.

The protein belongs to the glucosamine/galactosamine-6-phosphate isomerase family. NagB subfamily.

The enzyme catalyses alpha-D-glucosamine 6-phosphate + H2O = beta-D-fructose 6-phosphate + NH4(+). Its pathway is amino-sugar metabolism; N-acetylneuraminate degradation; D-fructose 6-phosphate from N-acetylneuraminate: step 5/5. Its function is as follows. Catalyzes the reversible isomerization-deamination of glucosamine 6-phosphate (GlcN6P) to form fructose 6-phosphate (Fru6P) and ammonium ion. The protein is Glucosamine-6-phosphate deaminase of Lacticaseibacillus paracasei (strain ATCC 334 / BCRC 17002 / CCUG 31169 / CIP 107868 / KCTC 3260 / NRRL B-441) (Lactobacillus paracasei).